The following is a 64-amino-acid chain: UPF0370 protein YPA_2246 (64 aa).

Residues 3–23 (WLADYWWIILILLVGMILNGI) form a helical membrane-spanning segment. Positions 36–47 (DNKPELPPHRDN) are enriched in basic and acidic residues. The tract at residues 36 to 64 (DNKPELPPHRDNNAQWDDEDDWPDQNKKK) is disordered.

This sequence belongs to the UPF0370 family.

The protein resides in the cell membrane. In Yersinia pestis bv. Antiqua (strain Antiqua), this protein is UPF0370 protein YPA_2246.